A 482-amino-acid chain; its full sequence is MKFIVKPHPEVFVKSDSVRKRFIRILESNLRSIIQRETKGVEVINRRDHIEVTGLSDEYRDVTLSVLTQTPGIHHVLEVKQSGFKDMHDIFEQCLEMNREVIEGKTFCVRVKRRGNHDFTSIELERYVGGGLNQSVESASVRLKNPEVTVKFEVANDKLNLIIARHKGLGGFPLGTQEDVLSLISGGFDSGVSSYLHIKRGSKVHYLFFNLGGPAHEIGVKQVSHFLWKKYGSSAKVKFISVDFDPVVAEILEKVDDGQMGVILKRMFMRAGGMVAEKFGIEGLVTGEALGQVSSQTLTNLRHIDNVTDSLILRPLINWDKEDIIDLAREIGTEDFAKTMPEYCGVISKKPTVKAVKEKLEKEEAKFDFSVLEQAVYNARVMDIRDIEKESQEQAPEVEMVSELGSDVVVLDIRSAEEEDEKPLELDGVEVTHIPFFKLATKFGDLDQSKEYLLYCERGVMSRLQALLLIENGYKNVKVYRP.

Residues 61 to 165 (DVTLSVLTQT…NDKLNLIIAR (105 aa)) form the THUMP domain. ATP contacts are provided by residues 183-184 (LI), Lys265, Gly287, and Gln296. Residues Cys344 and Cys456 are joined by a disulfide bond. The Rhodanese domain maps to 404-482 (LGSDVVVLDI…GYKNVKVYRP (79 aa)). The active-site Cysteine persulfide intermediate is Cys456.

The protein belongs to the ThiI family.

The protein localises to the cytoplasm. The enzyme catalyses [ThiI sulfur-carrier protein]-S-sulfanyl-L-cysteine + a uridine in tRNA + 2 reduced [2Fe-2S]-[ferredoxin] + ATP + H(+) = [ThiI sulfur-carrier protein]-L-cysteine + a 4-thiouridine in tRNA + 2 oxidized [2Fe-2S]-[ferredoxin] + AMP + diphosphate. The catalysed reaction is [ThiS sulfur-carrier protein]-C-terminal Gly-Gly-AMP + S-sulfanyl-L-cysteinyl-[cysteine desulfurase] + AH2 = [ThiS sulfur-carrier protein]-C-terminal-Gly-aminoethanethioate + L-cysteinyl-[cysteine desulfurase] + A + AMP + 2 H(+). It functions in the pathway cofactor biosynthesis; thiamine diphosphate biosynthesis. Catalyzes the ATP-dependent transfer of a sulfur to tRNA to produce 4-thiouridine in position 8 of tRNAs, which functions as a near-UV photosensor. Also catalyzes the transfer of sulfur to the sulfur carrier protein ThiS, forming ThiS-thiocarboxylate. This is a step in the synthesis of thiazole, in the thiamine biosynthesis pathway. The sulfur is donated as persulfide by IscS. The chain is tRNA sulfurtransferase from Aliivibrio fischeri (strain MJ11) (Vibrio fischeri).